The sequence spans 350 residues: Protein-glutamate methylesterase/protein-glutamine glutaminase 1 (350 aa).

The 116-residue stretch at 1–116 folds into the Response regulatory domain; that stretch reads MVVDDSAVVR…KGFLHDSAKV (116 aa). A 4-aspartylphosphate modification is found at Asp-50. The 191-residue stretch at 160–350 folds into the CheB-type methylesterase domain; the sequence is LKTTEQLVAI…IPQAILDCSH (191 aa). Active-site residues include Ser-172, His-198, and Asp-294.

The protein belongs to the CheB family. Phosphorylated by CheA. Phosphorylation of the N-terminal regulatory domain activates the methylesterase activity.

The protein resides in the cytoplasm. The catalysed reaction is [protein]-L-glutamate 5-O-methyl ester + H2O = L-glutamyl-[protein] + methanol + H(+). It carries out the reaction L-glutaminyl-[protein] + H2O = L-glutamyl-[protein] + NH4(+). Functionally, involved in chemotaxis. Part of a chemotaxis signal transduction system that modulates chemotaxis in response to various stimuli. Catalyzes the demethylation of specific methylglutamate residues introduced into the chemoreceptors (methyl-accepting chemotaxis proteins or MCP) by CheR. Also mediates the irreversible deamidation of specific glutamine residues to glutamic acid. This chain is Protein-glutamate methylesterase/protein-glutamine glutaminase 1, found in Photobacterium profundum (strain SS9).